A 97-amino-acid chain; its full sequence is Co-chaperonin GroES (97 aa).

Belongs to the GroES chaperonin family. In terms of assembly, heptamer of 7 subunits arranged in a ring. Interacts with the chaperonin GroEL.

The protein resides in the cytoplasm. In terms of biological role, together with the chaperonin GroEL, plays an essential role in assisting protein folding. The GroEL-GroES system forms a nano-cage that allows encapsulation of the non-native substrate proteins and provides a physical environment optimized to promote and accelerate protein folding. GroES binds to the apical surface of the GroEL ring, thereby capping the opening of the GroEL channel. This chain is Co-chaperonin GroES, found in Buchnera aphidicola subsp. Baizongia pistaciae (strain Bp).